The following is a 634-amino-acid chain: Glutathione S-transferase C-terminal domain-containing protein (634 aa).

A GST C-terminal domain is found at 131–333 (LGFKKTCLKA…QEVPKVKTAA (203 aa)). Positions 189-233 (RVHNDDKLRRQKLKQQKAAGSEPPSGKGKAKSKASAQKTPKDLAA) are disordered. A compositionally biased stretch (low complexity) spans 204–226 (QKAAGSEPPSGKGKAKSKASAQK).

This sequence belongs to the GSTCD family.

It localises to the cytoplasm. This chain is Glutathione S-transferase C-terminal domain-containing protein (Gstcd), found in Mus musculus (Mouse).